We begin with the raw amino-acid sequence, 319 residues long: Formimidoylglutamase (319 aa).

6 residues coordinate Mn(2+): H131, D154, H156, D158, C248, and D250.

This sequence belongs to the arginase family. The cofactor is Mn(2+).

The catalysed reaction is N-formimidoyl-L-glutamate + H2O = formamide + L-glutamate. The protein operates within amino-acid degradation; L-histidine degradation into L-glutamate; L-glutamate from N-formimidoyl-L-glutamate (hydrolase route): step 1/1. Functionally, catalyzes the conversion of N-formimidoyl-L-glutamate to L-glutamate and formamide. This Legionella pneumophila (strain Lens) protein is Formimidoylglutamase.